We begin with the raw amino-acid sequence, 454 residues long: uncharacterized protein (454 aa).

The [4Fe-4S] cluster site is built by Cys-73, Cys-79, Cys-82, and Cys-154. 4 residues coordinate S-adenosyl-L-methionine: Gln-279, Phe-307, Asp-328, and Asp-381. The Nucleophile role is filled by Cys-408.

It belongs to the class I-like SAM-binding methyltransferase superfamily. RNA M5U methyltransferase family.

This is an uncharacterized protein from Leptospira interrogans serogroup Icterohaemorrhagiae serovar Lai (strain 56601).